The sequence spans 684 residues: Proprotein convertase subtilisin/kexin type 9 (684 aa).

A signal peptide spans 1 to 28; it reads MGTVSSRRLWWPLPLLLLLLLGPPGARA. Residues 29 to 151 constitute a propeptide that is removed on maturation; that stretch reads QEDDDGDYEE…IEEDSSVFAQ (123 aa). Tyr-36 is modified (sulfotyrosine). Ser-45 carries the phosphoserine modification. In terms of domain architecture, Inhibitor I9 spans 75 to 148; it reads TYVVVLKDSD…VDYIEEDSSV (74 aa). The 307-residue stretch at 154–460 folds into the Peptidase S8 domain; sequence PWNLERITPA…GWQLFCRTVW (307 aa). Active-site charge relay system residues include Asp-185 and His-225. Intrachain disulfides connect Cys-222-Cys-254 and Cys-322-Cys-357. Catalysis depends on Ser-385, which acts as the Charge relay system. The segment at 451–684 is C-terminal domain; that stretch reads GWQLFCRTVW…AICCRSRHLA (234 aa). 3 cysteine pairs are disulfide-bonded: Cys-456–Cys-526, Cys-476–Cys-525, and Cys-485–Cys-508. Asn-532 carries an N-linked (GlcNAc...) asparagine glycan. Disulfide bonds link Cys-533/Cys-600, Cys-551/Cys-599, Cys-561/Cys-587, Cys-607/Cys-678, Cys-625/Cys-677, and Cys-634/Cys-653.

This sequence belongs to the peptidase S8 family. Monomer. Can self-associate to form dimers and higher multimers which may have increased LDLR degrading activity. The precursor protein but not the mature protein may form multimers. Interacts with APOB, VLDLR, LRP8/APOER2 and BACE1. The full-length immature form (pro-PCSK9) interacts with SCNN1A, SCNN1B and SCNN1G. The pro-PCSK9 form (via C-terminal domain) interacts with LDLR. Interacts (via the C-terminal domain) with ANXA2 (via repeat Annexin 1); the interaction inhibits the degradation of LDLR. Ca(2+) is required as a cofactor. Cleavage by furin and PCSK5 generates a truncated inactive protein that is unable to induce LDLR degradation. In terms of processing, undergoes autocatalytic cleavage in the endoplasmic reticulum to release the propeptide from the N-terminus and the cleavage of the propeptide is strictly required for its maturation and activation. The cleaved propeptide however remains associated with the catalytic domain through non-covalent interactions, preventing potential substrates from accessing its active site. As a result, it is secreted from cells as a propeptide-containing, enzymatically inactive protein. Post-translationally, phosphorylation protects the propeptide against proteolysis.

Its subcellular location is the cytoplasm. It is found in the secreted. The protein localises to the endosome. It localises to the lysosome. The protein resides in the cell surface. Its subcellular location is the endoplasmic reticulum. It is found in the golgi apparatus. With respect to regulation, its proteolytic activity is autoinhibited by the non-covalent binding of the propeptide to the catalytic domain. Inhibited by EGTA. Crucial player in the regulation of plasma cholesterol homeostasis. Binds to low-density lipid receptor family members: low density lipoprotein receptor (LDLR), very low density lipoprotein receptor (VLDLR), apolipoprotein E receptor (LRP1/APOER) and apolipoprotein receptor 2 (LRP8/APOER2), and promotes their degradation in intracellular acidic compartments. Acts via a non-proteolytic mechanism to enhance the degradation of the hepatic LDLR through a clathrin LDLRAP1/ARH-mediated pathway. May prevent the recycling of LDLR from endosomes to the cell surface or direct it to lysosomes for degradation. Can induce ubiquitination of LDLR leading to its subsequent degradation. Inhibits intracellular degradation of APOB via the autophagosome/lysosome pathway in a LDLR-independent manner. Involved in the disposal of non-acetylated intermediates of BACE1 in the early secretory pathway. Inhibits epithelial Na(+) channel (ENaC)-mediated Na(+) absorption by reducing ENaC surface expression primarily by increasing its proteasomal degradation. Regulates neuronal apoptosis via modulation of LRP8/APOER2 levels and related anti-apoptotic signaling pathways. This chain is Proprotein convertase subtilisin/kexin type 9 (PCSK9), found in Plecturocebus moloch (Dusky titi monkey).